We begin with the raw amino-acid sequence, 256 residues long: Homeobox protein ceh-34 (256 aa).

Positions 134–193 form a DNA-binding region, homeobox; that stretch reads GEETNYCFKSKSRNVLRDAYKKCQYPSVEDKRRLAQQTELSIIQVSNWFKNKRQRERAAG. Residues 187–233 form a disordered region; that stretch reads QRERAAGQLDRSSARSNDSDDGSSGCESKPPMNIDSPAPPPLPTSFD.

It belongs to the SIX/Sine oculis homeobox family. In terms of assembly, interacts (via N-terminus) with eya-1 (via C-terminus). Shows expression only in the pharyngeal nervous system.

It is found in the nucleus. Acts as a transcription regulator. Binds to the sequence motif 5'-TCAGGTT-3'. Binds to the cis-regulatory element of proapoptotic factor egl-1 gene and together with eya-1 activates egl-1 expression to promote motor neuron M4 sister cell apoptosis. Also promotes apoptosis of I1 pharyngeal neuron sister cell. Together with eya-1, required to specify the coelomocyte fate in embryonic and postembryonic precursors. Required to establish and maintain the differentiation of all 14 classes of pharyngeal neurons. Controls the neurotransmitter signaling capacity of the neurons and is required for the expression of some neurotransmitter receptors including mgl-1, glr-2 and ser-7. Affects the neuropeptidergic identity of pharyngeal neurons. Required for the pharyngeal expression of sensory receptors gur-3, glu-7 and str-97, antimicrobial defense genes such as spp-12, gpla-1/flr-2 and htrl-1, and pan-pharyngeal nervous system genes such as kin-36. Required to establish and maintain pharyngeal nervous system architecture by ensuring correct axon and synapse organization. Required for expression of eya-1 which may act as a transcriptional cofactor to specify distinct pharyngeal neuron types. Cooperates with several homeobox proteins to specify distinct pharyngeal neuron types including unc-86 in the NSM and I1 neurons, ceh-14 in the I2 neuron, ceh-2 and pros-1 in the I3 neuron, ceh-45 in the M1 neuron, ceh-2 in the M3 neuron, ceh-28 and zag-1 in the M4 neuron, and vab-15 in the M5 neuron. The polypeptide is Homeobox protein ceh-34 (ceh-34) (Caenorhabditis elegans).